We begin with the raw amino-acid sequence, 862 residues long: Rab GTPase-binding effector protein 1 (862 aa).

The residue at position 2 (alanine 2) is an N-acetylalanine. The stretch at 11 to 328 (DVSLQQRVAE…KDQEEDEQQR (318 aa)) forms a coiled coil. Lysine 282 is subject to N6-acetyllysine. 2 disordered regions span residues 315–340 (ELKK…KIDT) and 355–374 (EESS…THGS). Serine 374, serine 377, and serine 407 each carry phosphoserine. Threonine 408 carries the post-translational modification Phosphothreonine. The residue at position 410 (serine 410) is a Phosphoserine. A coiled-coil region spans residues 534–816 (DMCSNYEKQL…LQTELDVSEQ (283 aa)).

This sequence belongs to the rabaptin family. In terms of assembly, heterodimer with RABGEF1. The heterodimer binds RAB4A and RAB5A that have been activated by GTP-binding. Interacts with TSC2. Interacts with GGA1 (via GAE domain), GGA2 (via GAE domain) and GGA3 (via GAE domain). Interacts with AP1G1 (via GAE domain). Interacts with AP1G2 (via GAE domain). Interacts with ECPAS. Interacts with KCNH1. Interacts with PKD1 (via C-terminal domain) and GGA1; the interactions recruit PKD1:PKD2 complex to GGA1 and ARL3 at trans-Golgi network. Interacts with KCNH1. In terms of processing, proteolytic cleavage by caspases in apoptotic cells causes loss of endosome fusion activity.

It localises to the cytoplasm. Its subcellular location is the early endosome. The protein resides in the recycling endosome. It is found in the cytoplasmic vesicle. Rab effector protein acting as linker between gamma-adaptin, RAB4A and RAB5A. Involved in endocytic membrane fusion and membrane trafficking of recycling endosomes. Involved in KCNH1 channels trafficking to and from the cell membrane. Stimulates RABGEF1 mediated nucleotide exchange on RAB5A. Mediates the traffic of PKD1:PKD2 complex from the endoplasmic reticulum through the Golgi to the cilium. The sequence is that of Rab GTPase-binding effector protein 1 (Rabep1) from Rattus norvegicus (Rat).